The primary structure comprises 2275 residues: MSKRQKEFHDSLANEKTRVRLYKSGKNWVKSGIKEIEMFKIMGLPFISHSLVSQDNQSISKKMTGYGLKTTAVIGGAFTVNMLHDQQAFAASDAPLTSELNTQSETVGNQNSTTIEASTSTADSTSVTKNSSSVQTSNSDTVSSEKSEKVTSTTNSTSNQQEKLTSTSESTSSKNTTSSSDTKSVASTSSTEQPINTSTNQSTASNNTSQSTTPSSVNLNKTSTTSTSTAPVKLRTFSRLAMSTFASAATTTAVTANTITVNKDNLKQYMTTSGNATYDQSTGIVTLTQDAYSQKGAITLGTRIDSNKSFHFSGKVNLGNKYEGNGNGGDGIGFAFSPGVLGETGLNGAAVGIGGLSNAFGFKLDTYHNTSKPNSAAKANADPSNVAGGGAFGAFVTTDSYGVATTYTSSSTADNAAKLKVQPTNNTFQDFDINYNGDTKVMTVTYAGQTWTRNISDWIAKSGTTNFSLSMTASTGGATNLQQVQFGTFEYTESAVTQVRYVDVTTGKDIIPPKTYSGNVDQVVTIDNQQSALTAKGYNYTSVDSSYASTYNDTNKTVKMTNAGQSVTYYFTDVKAPTVTVGNQTIEVGKTMNPVVLTTTDNGTGTVTNTVTGLPSGLSYDSATNSIIGTPTKIGQSTVTVVSTDQANNKSTTTFTINVVDTTAPTVTPIGDQSSEVYSPISPIKIATQDNSGNAVTNTVTGLPSGLTFDSTNNTISGTPTNIGTSTITIVSTDASGNKTTTTFKYEVTRNSMSDSVSTSGSTQQSQSVSTSKADSQSASTSTSGSIVVSTSASTSKSTSVSLSDSVSASKSLSTSESNSVSSSTSTSLVNSQSVSSSMSDSASKSTSLSDSISNSSSTEKSESLSTSTSDSLRTSTSLSDSLSMSTSGSLSKSKSLSTSTSESSSTSASLSDSTSNAISTSESLSESASTSDSISISNSIANSQSASTSKSDSQSTSISLSTSDSKSMSTSESLSDSTSTSGSVSGSLSIAASQSVSTSTSDSMSTSEIVSDSISTSGSLSASDSKSMSVSSSMSTSQSGSTSESLSDSQSTSDSDSKSLSLSTSQSGSTSTSTSTSASVRTSESQSTSGSMSASQSDSMSISTSFSDSTSDSKSASTASSESISQSASTSTSGSVSTSTSLSTSNSERTSTSMSDSTSLSTSESDSISESTSTSDSISEAISASESTFISLSESNSTSDSESQSASAFLSESLSESTSESTSESVSSSTSESTSLSDSTSESGSTSTSLSNSTSGSASISTSTSISESTSTFKSESVSTSLSMSTSTSLSDSTSLSTSLSDSTSDSKSDSLSTSMSTSDSISTSKSDSISTSTSLSGSTSESESDSTSSSESKSDSTSMSISMSQSTSGSTSTSTSTSLSDSTSTSLSLSASMNQSGVDSNSASQSASNSTSTSTSESDSQSTSSYTSQSTSQSESTSTSTSLSDSTSISKSTSQSGSVSTSASLSGSESESDSQSISTSASESTSESASTSLSDSTSTSNSGSASTSTSLSNSASASESDSSSTSLSDSTSASMQSSESDSQSTSASLSDSLSTSTSNRMSTIASLSTSVSTSESGSTSESTSESDSTSTSLSDSQSTSRSTSASGSASTSTSTSDSRSTSASTSTSMRTSTSDSQSMSLSTSTSTSMSDSTSLSDSVSDSTSDSTSASTSGSMSVSISLSDSTSTSTSASEVMSASISDSQSMSESVNDSESVSESNSESDSKSMSGSTSVSDSGSLSVSTSLRKSESVSESSSLSGSQSMSDSVSTSDSSSLSVSTSLRSSESVSESDSLSDSKSTSGSTSTSTSGSLSTSTSLSGSESVSESTSLSDSISMSDSTSTSDSDSLSGSISLSGSTSLSTSDSLSDSKSLSSSQSMSGSESTSTSVSDSQSSSTSNSQFDSMSISASESDSMSTSDSSSISGSNSTSTSLSTSDSMSGSVSVSTSTSLSDSISGSTSLSDSSSTSTSTSLSDSMSQSQSTSTSASGSLSTSISTSMSMSASTSSSQSTSVSTSLSTSDSISDSTSISISGSQSTVESESTSDSTSISDSESLSTSDSDSTSTSTSDSTSGSTSTSISESLSTSGSGSTSVSDSTSMSESDSTSVSMSQSMSGSTYNSTSVSDSESVSTSTSTSLSTSDSTSTSESLSTSMSGSQSISDSTSTSMSGSTSTSESNSMHPSDSMSMHHTHSTSTSRLSSEATTSTSESQSTLSATSEVTKHNGTPAQSEKRLPDTGDSIKQNGLLGGVMTLLVGLGLMKRKKKKDENDQDDSQA.

Positions 1-89 (MSKRQKEFHD…VNMLHDQQAF (89 aa)) are cleaved as a signal peptide. Positions 90 to 230 (AASDAPLTSE…KTSTTSTSTA (141 aa)) are serine-rich repeat region 1, SRR1. The span at 100-111 (LNTQSETVGNQN) shows a compositional bias: polar residues. Disordered stretches follow at residues 100-229 (LNTQ…STST) and 751-2247 (NSMS…GLLG). Residues 112 to 128 (STTIEASTSTADSTSVT) show a composition bias toward low complexity. The span at 129–140 (KNSSSVQTSNSD) shows a compositional bias: polar residues. The span at 150–229 (VTSTTNSTSN…NKTSTTSTST (80 aa)) shows a compositional bias: low complexity. The tract at residues 231-751 (PVKLRTFSRL…TTFKYEVTRN (521 aa)) is non-repeat region (NRR). Composition is skewed to low complexity over residues 752–1392 (SMSD…LSLS) and 1402–2218 (SNSA…ATSE). The serine-rich repeat region 2, SRR2 stretch occupies residues 752–2236 (SMSDSVSTSG…AQSEKRLPDT (1485 aa)). An LPXTG sorting signal motif is present at residues 2233-2237 (LPDTG). Residue Thr-2236 is modified to Pentaglycyl murein peptidoglycan amidated threonine. A propeptide spans 2237 to 2275 (GDSIKQNGLLGGVMTLLVGLGLMKRKKKKDENDQDDSQA) (removed by sortase).

Belongs to the serine-rich repeat protein (SRRP) family. Proteolytically cleaved by a metalloprotease. In terms of processing, glycosylated. It is probable that most of the Ser residues in SSR1 and SSR2 are O-GlcNAcylated. Sequential glycosylation by sugar transferases are able to generate complex sugar polymorphisms.

The protein resides in the secreted. The protein localises to the cell wall. Mediates binding to human platelets, possibly through a receptor-ligand interaction. Probably associated with virulence in endovascular infection. The chain is Serine-rich adhesin for platelets (sraP) from Staphylococcus aureus (strain MSSA476).